We begin with the raw amino-acid sequence, 429 residues long: Phosphoribosylamine--glycine ligase (429 aa).

In terms of domain architecture, ATP-grasp spans lysine 109–aspartate 316. Residue valine 135 to serine 196 participates in ATP binding. A disordered region spans residues serine 212–serine 234. The span at glutamine 213–threonine 223 shows a compositional bias: basic and acidic residues. Residues glutamate 286 and asparagine 288 each contribute to the Mg(2+) site.

The protein belongs to the GARS family. Requires Mg(2+) as cofactor. The cofactor is Mn(2+).

The catalysed reaction is 5-phospho-beta-D-ribosylamine + glycine + ATP = N(1)-(5-phospho-beta-D-ribosyl)glycinamide + ADP + phosphate + H(+). The protein operates within purine metabolism; IMP biosynthesis via de novo pathway; N(1)-(5-phospho-D-ribosyl)glycinamide from 5-phospho-alpha-D-ribose 1-diphosphate: step 2/2. The protein is Phosphoribosylamine--glycine ligase of Vibrio vulnificus (strain YJ016).